A 188-amino-acid polypeptide reads, in one-letter code: Der GTPase-activating protein YihI (188 aa).

2 disordered regions span residues M1–P80 and D162–F188. Basic and acidic residues predominate over residues T27–D37. Positions N47–G57 are enriched in polar residues.

It belongs to the YihI family. In terms of assembly, interacts with Der.

A GTPase-activating protein (GAP) that modifies Der/EngA GTPase function. May play a role in ribosome biogenesis. The polypeptide is Der GTPase-activating protein YihI (Yersinia pseudotuberculosis serotype O:1b (strain IP 31758)).